The chain runs to 207 residues: Ras-related protein Rab-8A (207 aa).

10 residues coordinate GTP: S17, G18, V19, G20, K21, T22, C23, S35, S39, and T40. T22 contributes to the Mg(2+) binding site. 2 consecutive short sequence motifs (switch) follow at residues 31 to 45 and 63 to 80; these read DAFN…GIDF and DTAG…YYRG. The Mg(2+) site is built by T40 and D63. G66 serves as a coordination point for GTP. T72 carries the phosphothreonine modification. Residues N121, K122, D124, A152, and K153 each coordinate GTP. Phosphoserine is present on residues S181 and S185. C204 bears the Cysteine methyl ester mark. C204 carries the S-geranylgeranyl cysteine lipid modification. Residues 205–207 constitute a propeptide, removed in mature form; sequence VLL.

This sequence belongs to the small GTPase superfamily. Rab family. In terms of assembly, interacts (GTP-bound form) with MICALL1; regulates RAB8A association with recycling endosomes. Interacts with MICALL2; competes with RAB13 and is involved in E-cadherin endocytic recycling. Interacts (GTP-bound form) with MICAL1, MICALCL, MICAL3, EHBP1 and EHBP1L1; at least in case of MICAL1, MICALCL, MICAL3 and EHBP1L1 two molecules of RAB8A can bind to one molecule of the effector protein; ternary complexes of RAB8A, RAB13 and either MICAL1 or EHBP1L1 are possible. Interacts with EHD1. Interacts with MAP4K2 and SYTL4. Interacts with SGSM1 and SGSM3. Interacts with RABIF, RIMS2, RPH3A and RPH3A. Interacts with OPTN. Interacts with RAB3IP, RAB3IP functions as guanine exchange factor (GEF). Interacts with MYO5B. Interacts with CIMAP3. Interacts with BIRC6/bruce. Interacts with OCRL. Interacts with AHI1. Interacts with DCDC1. Interacts with LRRK2; interaction facilitates phosphorylation of Thr-72. Interacts with RAB31P, GDI1, GDI2, CHM, CHML, RABGGTA, RABGGTB, TBC1D15 and INPP5B; these interactions are dependent on Thr-72 not being phosphorylated. Interacts with RILPL1 and RILPL2; these interactions are dependent on the phosphorylation of Thr-72 by LRRK2. Interacts with DZIP1; prevents inhibition by the GDP-dissociation inhibitor GDI2. Interacts (in GDP-bound form) with RAB3IP/Rabin8, RAB3IP functions as guanine exchange factor (GEF) towards RAB8A. Interacts (in GDP-bound form) with RPGR, RPGR functions as GEF towards RAB8A. It depends on Mg(2+) as a cofactor. In terms of processing, phosphorylation of Thr-72 in the switch II region by LRRK2 prevents the association of RAB regulatory proteins, including CHM, CHML and RAB GDP dissociation inhibitors GDI1 and GDI2. Phosphorylation by LRRK2 is required for localization to stressed lysosomes.

The protein localises to the cell membrane. It is found in the golgi apparatus. It localises to the endosome membrane. The protein resides in the recycling endosome membrane. Its subcellular location is the cell projection. The protein localises to the cilium. It is found in the cytoplasmic vesicle. It localises to the phagosome membrane. The protein resides in the cytoplasm. Its subcellular location is the cytoskeleton. The protein localises to the microtubule organizing center. It is found in the centrosome. It localises to the centriole. The protein resides in the cilium basal body. Its subcellular location is the midbody. The protein localises to the lysosome. It catalyses the reaction GTP + H2O = GDP + phosphate + H(+). Its activity is regulated as follows. Regulated by guanine nucleotide exchange factors (GEFs) such as RAB3IP/Rabin8 and RPGR which promote the exchange of bound GDP for free GTP, GTPase activating proteins (GAPs) which increase the GTP hydrolysis activity, and GDP dissociation inhibitors (GDIs) which inhibit the dissociation of the nucleotide from the GTPase. Activated in response to insulin. Functionally, the small GTPases Rab are key regulators of intracellular membrane trafficking, from the formation of transport vesicles to their fusion with membranes. Rabs cycle between an inactive GDP-bound form and an active GTP-bound form that is able to recruit to membranes different sets of downstream effectors directly responsible for vesicle formation, movement, tethering and fusion. RAB8A is involved in polarized vesicular trafficking and neurotransmitter release. Together with RAB11A, RAB3IP, the exocyst complex, PARD3, PRKCI, ANXA2, CDC42 and DNMBP promotes transcytosis of PODXL to the apical membrane initiation sites (AMIS), apical surface formation and lumenogenesis. Regulates the compacted morphology of the Golgi. Together with MYO5B and RAB11A participates in epithelial cell polarization. Also involved in membrane trafficking to the cilium and ciliogenesis. Together with MICALL2, may also regulate adherens junction assembly. May play a role in insulin-induced transport to the plasma membrane of the glucose transporter GLUT4 and therefore play a role in glucose homeostasis. Involved in autophagy. Participates in the export of a subset of neosynthesized proteins through a Rab8-Rab10-Rab11-dependent endososomal export route. Targeted to and stabilized on stressed lysosomes through LRRK2 phosphorylation. Suppresses stress-induced lysosomal enlargement through EHBP1 and EHNP1L1 effector proteins. This is Ras-related protein Rab-8A (RAB8A) from Bos taurus (Bovine).